The sequence spans 240 residues: DISARM protein DrmC (240 aa).

The PLD phosphodiesterase domain maps to 174 to 201 (GYSSLHAKVIMVDEEKAFVSSANLSYNG). Residues His-179, Lys-181, and Asp-186 contribute to the active site.

It belongs to the phospholipase D family.

It is found in the cytoplasm. In terms of biological role, component of antiviral defense system DISARM (defense island system associated with restriction-modification), composed of DrmE, DrmA, DrmB, DrmC and DrmMII. DISARM is probably a multi-gene restriction module, this subunit is probably a phospholipase or nuclease. Expression of DISARM in B.subtilis (strain BEST7003) confers resistance to phages Nf, phi29, phi105, phi3T, SPO1, SPR and SPP1. Protection is over 10(7)-fold against phi3T, 10(4)-10(5)-fold against Nf, phi29, phi105 and SPR, 100-fold against SPO1 and 10-fold against SPP1. DISARM does not interfere with phage adsorption, but instead interferes with (phi3T) DNA replication early in its cycle, preventing replication, circularization and lysogeny and probably causes phage DNA degradation (DNA is degraded in SPP1-infected cells). This chain is DISARM protein DrmC, found in Bacillus paralicheniformis (strain ATCC 9945a / NCIMB 11709 / CD-2).